The primary structure comprises 337 residues: Cytoskeleton protein RodZ (337 aa).

Residues 1–111 are Cytoplasmic-facing; it reads MNTEATHDQN…LGKRRKKRDG (111 aa). The 53-residue stretch at 19-71 folds into the HTH cro/C1-type domain; sequence LRNAREQLGLSQQAVAERLCLKVSTVRDIEEDKAPADLASTFLRGYIRSYARL. The H-T-H motif DNA-binding region spans 30–49; sequence QQAVAERLCLKVSTVRDIEE. A helical; Signal-anchor for type II membrane protein transmembrane segment spans residues 112–132; sequence WLMTFTWLVLFVVIGLSGAWW. Residues 133-337 lie on the Periplasmic side of the membrane; sequence WQDHKAQQEE…TLNAEQSPAQ (205 aa). Over residues 145 to 167 the composition is skewed to polar residues; it reads TMADQSSAELSSNSEQGQSVPLN. The disordered stretch occupies residues 145–236; the sequence is TMADQSSAEL…TAATTPDGAA (92 aa). Over residues 168–207 the composition is skewed to low complexity; that stretch reads TSTTTDPATTSTPPASVDTTATNTQTPVVTAPAPAVDPQQ. Polar residues predominate over residues 208-218; it reads NAVVSPSQANV. The segment covering 219–236 has biased composition (low complexity); the sequence is DTAATPAPTAATTPDGAA.

It belongs to the RodZ family.

It is found in the cell inner membrane. Its function is as follows. Cytoskeletal protein that is involved in cell-shape control through regulation of the length of the long axis. This is Cytoskeleton protein RodZ from Escherichia coli O157:H7.